Here is a 478-residue protein sequence, read N- to C-terminus: Transcription factor PIF1 (478 aa).

T10 is subject to Phosphothreonine; by CK2. Disordered regions lie at residues 56 to 80 (LHTK…QPSS), 122 to 144 (VSQV…PVRN), 172 to 210 (VRES…GGGA), 230 to 294 (TSSS…LSER), and 391 to 478 (TQTH…HTTG). A compositionally biased stretch (low complexity) spans 69–80 (LPSMDPQQQPSS). Over residues 179-189 (SPSATPSAAAS) the composition is skewed to low complexity. The residue at position 197 (T197) is a Phosphothreonine; by CK2. S202 is subject to Phosphoserine; by CK2. Composition is skewed to basic and acidic residues over residues 238 to 272 (SEIE…ETKQ) and 284 to 294 (RAAEVHNLSER). The bHLH domain maps to 284–333 (RAAEVHNLSERKRRDRINERMKALQELIPRCNKSDKASMLDEAIEYMKSL). Residues 415–426 (PNQQYDPTSGQP) show a composition bias toward polar residues. Phosphoserine; by CK2 occurs at positions 464, 465, 466, and 469. Residues 465–478 (SSKESEDHGNHTTG) show a composition bias toward basic and acidic residues.

In terms of assembly, homodimer. Interacts with the photoactivated conformer (Pfr) of phytochromes A and B, PHYA and PHYB. Also interacts with APRR1/TOC1. Binds to RGL2, RGA and FHY3 (via N-terminus). Associates to PTAC12/HMR/PAP5 which acts as a transcriptional coactivator. Binds directly to PCH1 and PCHL; this interaction facilitates its association with phyB and its subsequent light-induced degradation. Post-translationally, phosphorylated at Thr-10, Thr-197, Ser-202, Ser-464, Ser-465, Ser-466 and Ser-469 by CK2. Phosphorylated and ubiquitinated after an exposure to light (especially red and far-red), in a phytochrome-dependent manner. Modified proteins undergo a proteasome-dependent degradation. Its stability and degradation plays a central role in photomorphogenesis of seedlings. Mainly expressed in leaves, stems and seedlings, and, to a lower extent, in fruits, flowers and roots.

It is found in the nucleus. Its activity is regulated as follows. DNA-binding ability is inhibited by PCH1 and PCHL to negatively regulate the expressions of its target genes. In terms of biological role, transcription activator. Negatively regulates chlorophyll biosynthesis and seed germination in the dark, and lightinduced degradation of PIF1 relieves this negative regulation to promote photomorphogenesis. Binds to the G-box motif (5'-CACGTG-3') found in many light-regulated promoters. Promotes the expression of SOM, and thus modulates responses to abscisic acid (ABA) and gibberellic acid (GA). The chain is Transcription factor PIF1 from Arabidopsis thaliana (Mouse-ear cress).